Reading from the N-terminus, the 966-residue chain is Phosphoenolpyruvate carboxylase, housekeeping isozyme (966 aa).

Ser-11 bears the Phosphoserine mark. Catalysis depends on residues His-172 and Lys-601.

The protein belongs to the PEPCase type 1 family. In terms of assembly, homotetramer. It depends on Mg(2+) as a cofactor.

It localises to the cytoplasm. It catalyses the reaction oxaloacetate + phosphate = phosphoenolpyruvate + hydrogencarbonate. By light-reversible phosphorylation. Its function is as follows. Through the carboxylation of phosphoenolpyruvate (PEP) it forms oxaloacetate, a four-carbon dicarboxylic acid source for the tricarboxylic acid cycle. The sequence is that of Phosphoenolpyruvate carboxylase, housekeeping isozyme from Saccharum hybrid (Sugarcane).